The primary structure comprises 87 residues: Sec-independent protein translocase protein TatA (87 aa).

Residues 1 to 21 traverse the membrane as a helical segment; sequence MGSFSIWHWLIVLLIVVMVFG. The segment at 40–87 is disordered; that stretch reads KDGMKDGSTPEGTPASTTAATPPAGQVTNQQAHAADPGTIDVEAKHKG. Low complexity predominate over residues 46-64; the sequence is GSTPEGTPASTTAATPPAG.

The protein belongs to the TatA/E family. In terms of assembly, the Tat system comprises two distinct complexes: a TatABC complex, containing multiple copies of TatA, TatB and TatC subunits, and a separate TatA complex, containing only TatA subunits. Substrates initially bind to the TatABC complex, which probably triggers association of the separate TatA complex to form the active translocon.

The protein localises to the cell inner membrane. In terms of biological role, part of the twin-arginine translocation (Tat) system that transports large folded proteins containing a characteristic twin-arginine motif in their signal peptide across membranes. TatA could form the protein-conducting channel of the Tat system. This Paracidovorax citrulli (strain AAC00-1) (Acidovorax citrulli) protein is Sec-independent protein translocase protein TatA.